The primary structure comprises 351 residues: MTALTLAPCDLVVADLGGTTLRVGRITAGTSEVHDVKRVPTNGLGRYGALAPQELQDRVMEQLTREIAAHLTRPGQAPAQAVAVSFAGPMTADGVVLAGPTLWGGPAAPLPVADVLTQRLGLPVVAANDVTAAAWRYAAAEPEPFCLTTVSSGIGNKVFRHGEIVIDQLGYGGEIGHWLVDHAEDAAPCECGGRGHLGAIASGRGALFAVRAAAAADASAFARSALAGPSGGVPEAITNEAFAAAARAGDTFARESLRRSLRPLASAVSLLFTAIGVRRYLFVGGFALALGDTFLTLLGDELVRVGCFGLDEYATRAMLALGEDDDDHCLIGIGQLAAARLGAPRAVEVTA.

The protein belongs to the ROK (NagC/XylR) family.

The enzyme catalyses valienone + ATP = valienone 7-phosphate + ADP + H(+). The catalysed reaction is validone + ATP = validone 7-phosphate + ADP + H(+). Involved in the biosynthesis of the antifungal agent validamycin A. Catalyzes the phosphorylation of valienone and validone to their 7-phosphate derivatives. The sequence is that of C(7)-cyclitol 7-kinase from Streptomyces hygroscopicus subsp. jinggangensis (strain 5008).